The primary structure comprises 347 residues: NADH-ubiquinone oxidoreductase chain 2 (347 aa).

10 consecutive transmembrane segments (helical) span residues 3 to 23 (PPILLIILLTMISGTMIVLTS), 25 to 45 (HWLTIWIGLEMNMLAIIPILM), 60 to 80 (LLTQATASMILMMGITINLMF), 96 to 116 (AMVTTALAMKLGLAPFHFWVP), 149 to 169 (IDPNLLLPMAITSILIGGWGG), 178 to 198 (ILAYSSIAHMGWMTAVTLYNP), 200 to 220 (MMLLNLTIYIIMTTTTFMLFM), 237 to 257 (APLITPLILMLMLSLGGLPPL), 274 to 294 (EMIIIPTIMAITALLNLYFYM), and 323 to 343 (MILLSPLTVVSTMLLPITPLL).

It belongs to the complex I subunit 2 family. In terms of assembly, core subunit of respiratory chain NADH dehydrogenase (Complex I) which is composed of 45 different subunits. Interacts with TMEM242.

Its subcellular location is the mitochondrion inner membrane. The enzyme catalyses a ubiquinone + NADH + 5 H(+)(in) = a ubiquinol + NAD(+) + 4 H(+)(out). In terms of biological role, core subunit of the mitochondrial membrane respiratory chain NADH dehydrogenase (Complex I) which catalyzes electron transfer from NADH through the respiratory chain, using ubiquinone as an electron acceptor. Essential for the catalytic activity and assembly of complex I. In Mungos mungo (Banded mongoose), this protein is NADH-ubiquinone oxidoreductase chain 2.